Consider the following 245-residue polypeptide: Ribonuclease 3 (245 aa).

Residues 19-148 (FKLFQEKIGI…FIGALYLDQG (130 aa)) form the RNase III domain. Mg(2+) is bound at residue E61. D65 is an active-site residue. Residues D134 and E137 each coordinate Mg(2+). Residue E137 is part of the active site. A DRBM domain is found at 174–243 (DYKSQLQELI…AAEALKKLKE (70 aa)).

Belongs to the ribonuclease III family. As to quaternary structure, homodimer. It depends on Mg(2+) as a cofactor.

It is found in the cytoplasm. The catalysed reaction is Endonucleolytic cleavage to 5'-phosphomonoester.. Functionally, digests double-stranded RNA. Involved in the processing of primary rRNA transcript to yield the immediate precursors to the large and small rRNAs (23S and 16S). Processes some mRNAs, and tRNAs when they are encoded in the rRNA operon. Processes pre-crRNA and tracrRNA of type II CRISPR loci if present in the organism. This is Ribonuclease 3 from Bacillus cereus (strain 03BB102).